Here is a 389-residue protein sequence, read N- to C-terminus: MSTENLPQNPEQSPRRPPRKPRVAVVFGGRSSEHGISVVTAGAVLAAIDRTRYDVLPIGITRDGRWALTADEPERMAITERRTPDVEELAESTEGGVLLPVDPANREVVYSEPGSVPKALGEVDVVFPVLHGPYGEDGTLQGLLELSGVPYVGAGVLASAVGQDKEYMKAVFTSYGLKVGPYAVIRPREWEQDRSGARKKIVDFAGEHGWPLFVKPARAGSSIGITKVDDLAGLDEAIEEARRHDPKILVEAALRGREIECGVLEFEDGPRASVPAEIPPPSEHAYYDFEAKYIDSTPGIVPAPLTAEETAEVQRLAVAAFDAASCEGLVRADFFLTEDDEFVINEINTMPGFTPISMYPQMWQASGVSYPELVDRLVQAALRRPTGLR.

Polar residues predominate over residues 1 to 12 (MSTENLPQNPEQ). The disordered stretch occupies residues 1–22 (MSTENLPQNPEQSPRRPPRKPR). The ATP-grasp domain maps to 169-379 (KAVFTSYGLK…YPELVDRLVQ (211 aa)). 205–260 (AGEHGWPLFVKPARAGSSIGITKVDDLAGLDEAIEEARRHDPKILVEAALRGREIE) provides a ligand contact to ATP. Positions 333, 346, and 348 each coordinate Mg(2+).

The protein belongs to the D-alanine--D-alanine ligase family. The cofactor is Mg(2+). Mn(2+) serves as cofactor.

It localises to the cytoplasm. The catalysed reaction is 2 D-alanine + ATP = D-alanyl-D-alanine + ADP + phosphate + H(+). Its pathway is cell wall biogenesis; peptidoglycan biosynthesis. In terms of biological role, cell wall formation. The sequence is that of D-alanine--D-alanine ligase (ddl) from Streptomyces coelicolor (strain ATCC BAA-471 / A3(2) / M145).